The chain runs to 312 residues: Putative endo-1,4-beta-xylanase (312 aa).

A GH10 domain is found at 1–301 (MKQQYLLDYE…KPCFYSFLQA (301 aa)). E104 acts as the Proton donor in catalysis. Residue E216 is the Nucleophile of the active site.

Belongs to the glycosyl hydrolase 10 (cellulase F) family.

The enzyme catalyses Endohydrolysis of (1-&gt;4)-beta-D-xylosidic linkages in xylans.. The protein operates within glycan degradation; xylan degradation. Its function is as follows. Could be a xylanase. This is Putative endo-1,4-beta-xylanase from Caldicellulosiruptor saccharolyticus (Caldocellum saccharolyticum).